The following is a 770-amino-acid chain: Integrin beta-2 (770 aa).

Residues 1 to 22 (MLPQRPQLLLLAGLLSLQSVLS) form the signal peptide. Position 23 is a pyrrolidone carboxylic acid (Q23). Topologically, residues 23–701 (QECTKYKVST…DMLECVKGPN (679 aa)) are extracellular. The PSI domain maps to 24 to 74 (ECTKYKVSTCRDCIESGPSCAWCQKLNFTGQGEPDSTRCDTRAQLLSKGCP). Cystine bridges form between C25–C43, C33–C447, C36–C62, C46–C73, C191–C198, C246–C286, C386–C400, C420–C445, C449–C467, C459–C470, C472–C481, C483–C514, C497–C512, C506–C517, C519–C534, C536–C559, C541–C557, C549–C562, C564–C573, C575–C598, C582–C596, C590–C601, C603–C612, C615–C618, C622–C663, C628–C647, C631–C643, and C671–C696. N50 and N116 each carry an N-linked (GlcNAc...) asparagine glycan. Positions 124–363 (GYPIDLYYLM…ELIKSAYNKL (240 aa)) constitute a VWFA domain. Mg(2+) is bound by residues S136 and S138. The Ca(2+) site is built by S138, D141, D142, and D173. Ca(2+)-binding residues include N229, D231, P233, and E234. E234 contacts Mg(2+). Residue N254 is glycosylated (N-linked (GlcNAc...) asparagine). Positions 264 and 347 each coordinate Ca(2+). The Cell attachment site signature appears at 397 to 399 (RGD). 4 I-EGF domains span residues 449-482 (CREA…KNCE), 483-535 (CQTH…QFCE), 536-574 (CDNV…SACQ), and 575-613 (CLKS…PLCI). A glycan (N-linked (GlcNAc...) asparagine) is linked at N501. N642 carries N-linked (GlcNAc...) asparagine glycosylation. The chain crosses the membrane as a helical span at residues 702–724 (IAAIVGGTVGGVVLVGILLLAIW). Residues 725 to 770 (KALTHLSDLREYHRFEKEKLKSQWNNDNPLFKSATTTVMNPKFAES) lie on the Cytoplasmic side of the membrane. Phosphoserine occurs at positions 746 and 757. 2 positions are modified to phosphothreonine: T759 and T761.

This sequence belongs to the integrin beta chain family. In terms of assembly, heterodimer of an alpha and a beta subunit. The ITGB2 beta subunit associates with the ITGAL, ITGAM, ITGAX or ITGAD alpha subunits. Found in a complex with CD177 and ITGAM/CD11b. Interacts with FGR. Interacts with COPS5 and RANBP9. Interacts with FLNA (via filamin repeats 4, 9, 12, 17, 19, 21, and 23). Interacts with THBD. Both Ser-746 and Ser-757 become phosphorylated when T-cells are exposed to phorbol esters. Phosphorylation on Thr-759 (but not on Ser-757) allows interaction with 14-3-3 proteins.

The protein resides in the cell membrane. The protein localises to the membrane raft. Functionally, integrin ITGAL/ITGB2 is a receptor for ICAM1, ICAM2, ICAM3 and ICAM4. Integrin ITGAL/ITGB2 is also a receptor for the secreted form of ubiquitin-like protein ISG15; the interaction is mediated by ITGAL. Integrins ITGAM/ITGB2 and ITGAX/ITGB2 are receptors for the iC3b fragment of the third complement component and for fibrinogen. Integrin ITGAX/ITGB2 recognizes the sequence G-P-R in fibrinogen alpha-chain. Integrin ITGAM/ITGB2 recognizes P1 and P2 peptides of fibrinogen gamma chain. Integrin ITGAM/ITGB2 is also a receptor for factor X. Integrin ITGAD/ITGB2 is a receptor for ICAM3 and VCAM1. Contributes to natural killer cell cytotoxicity. Involved in leukocyte adhesion and transmigration of leukocytes including T-cells and neutrophils. Triggers neutrophil transmigration during lung injury through PTK2B/PYK2-mediated activation. Integrin ITGAL/ITGB2 in association with ICAM3, contributes to apoptotic neutrophil phagocytosis by macrophages. In association with alpha subunit ITGAM/CD11b, required for CD177-PRTN3-mediated activation of TNF primed neutrophils. This Ovis canadensis (Bighorn sheep) protein is Integrin beta-2 (ITGB2).